A 1220-amino-acid chain; its full sequence is Pesticidal crystal protein Cry5Ac (1220 aa).

Residues 1194–1220 (PLPTDDQNSEGNTAFSTNSDTSMNNNQ) form a disordered region. Residues 1198 to 1220 (DDQNSEGNTAFSTNSDTSMNNNQ) are compositionally biased toward polar residues.

The protein belongs to the delta endotoxin family.

Promotes colloidosmotic lysis by binding to the midgut epithelial cells of hymenopteran species. This Bacillus thuringiensis protein is Pesticidal crystal protein Cry5Ac (cry5Ac).